The chain runs to 534 residues: 26S proteasome non-ATPase regulatory subunit 3 (534 aa).

The segment covering 1–16 (MKQEGSARRRGADKAK) has biased composition (basic and acidic residues). Positions 1–68 (MKQEGSARRR…AAEHSQRELD (68 aa)) are disordered. A compositionally biased stretch (pro residues) spans 17 to 32 (PPPGGGEQEPPPPPAP). A Glycyl lysine isopeptide (Lys-Gly) (interchain with G-Cter in SUMO1); alternate cross-link involves residue Lys-38. A Glycyl lysine isopeptide (Lys-Gly) (interchain with G-Cter in SUMO2); alternate cross-link involves residue Lys-38. Over residues 49-61 (GETAGKTAAAAAE) the composition is skewed to low complexity. The PCI domain occupies 286–465 (ARYLYYTGRI…GYVQSKEMID (180 aa)). Residues Ser-418 and Ser-430 each carry the phosphoserine modification. Positions 500-534 (SYNKDLESAEERREREQQDLEFAKEMAEDDDDSFP) are disordered. Residues 501–525 (YNKDLESAEERREREQQDLEFAKEM) are compositionally biased toward basic and acidic residues.

This sequence belongs to the proteasome subunit S3 family. Component of the 19S proteasome regulatory particle complex. The 26S proteasome consists of a 20S core particle (CP) and two 19S regulatory subunits (RP). The regulatory particle is made of a lid composed of 9 subunits including PSMD3, a base containing 6 ATPases and few additional components. Interacts with UBQLN1 (via ubiquitin-like domain). Interacts with ERCC6.

Component of the 26S proteasome, a multiprotein complex involved in the ATP-dependent degradation of ubiquitinated proteins. This complex plays a key role in the maintenance of protein homeostasis by removing misfolded or damaged proteins, which could impair cellular functions, and by removing proteins whose functions are no longer required. Therefore, the proteasome participates in numerous cellular processes, including cell cycle progression, apoptosis, or DNA damage repair. This Bos taurus (Bovine) protein is 26S proteasome non-ATPase regulatory subunit 3 (PSMD3).